The chain runs to 506 residues: Trans-cinnamate 4-monooxygenase C4H1 (506 aa).

Short sequence motifs (nuclear localization signal) lie at residues 161–168 and 247–254; these read VKKMPESA and QRRLQLFK. Cysteine 448 lines the heme pocket.

It belongs to the cytochrome P450 family. The cofactor is heme.

It is found in the nucleus. The catalysed reaction is (E)-cinnamate + reduced [NADPH--hemoprotein reductase] + O2 = (E)-4-coumarate + oxidized [NADPH--hemoprotein reductase] + H2O + H(+). It participates in phenylpropanoid metabolism; trans-4-coumarate biosynthesis; trans-4-coumarate from trans-cinnamate: step 1/1. Functionally, component of the floral volatile benzenoid/phenylpropanoid (FVBP) biosynthetic pathway that controls carbon flux to pigments essential for pollination or UV protection, to numerous pytoalexins synthesized by plants when challenged by pathogens, and to lignins. The protein is Trans-cinnamate 4-monooxygenase C4H1 of Petunia hybrida (Petunia).